Consider the following 307-residue polypeptide: Urease accessory protein UreD (307 aa).

This sequence belongs to the UreD family. As to quaternary structure, ureD, UreF and UreG form a complex that acts as a GTP-hydrolysis-dependent molecular chaperone, activating the urease apoprotein by helping to assemble the nickel containing metallocenter of UreC. The UreE protein probably delivers the nickel.

The protein localises to the cytoplasm. Required for maturation of urease via the functional incorporation of the urease nickel metallocenter. The polypeptide is Urease accessory protein UreD (Prochlorococcus marinus (strain NATL1A)).